A 470-amino-acid chain; its full sequence is Methylenetetrahydrofolate--tRNA-(uracil-5-)-methyltransferase TrmFO (470 aa).

FAD is bound at residue 10 to 15; it reads GAGLAG.

The protein belongs to the MnmG family. TrmFO subfamily. It depends on FAD as a cofactor.

It localises to the cytoplasm. It carries out the reaction uridine(54) in tRNA + (6R)-5,10-methylene-5,6,7,8-tetrahydrofolate + NADH + H(+) = 5-methyluridine(54) in tRNA + (6S)-5,6,7,8-tetrahydrofolate + NAD(+). The enzyme catalyses uridine(54) in tRNA + (6R)-5,10-methylene-5,6,7,8-tetrahydrofolate + NADPH + H(+) = 5-methyluridine(54) in tRNA + (6S)-5,6,7,8-tetrahydrofolate + NADP(+). Its function is as follows. Catalyzes the folate-dependent formation of 5-methyl-uridine at position 54 (M-5-U54) in all tRNAs. The sequence is that of Methylenetetrahydrofolate--tRNA-(uracil-5-)-methyltransferase TrmFO from Prochlorococcus marinus (strain MIT 9312).